A 229-amino-acid polypeptide reads, in one-letter code: Guanylate kinase (229 aa).

Residues 7–42 (RVLQKCAYREEFKGDMERSTAATSKLPLEVELSRNS) form the RPE1 insert domain. The region spanning 44–222 (GLIIILSSPS…TLKKIHAIIV (179 aa)) is the Guanylate kinase-like domain. 51-58 (SPSGTGKS) contributes to the ATP binding site.

This sequence belongs to the guanylate kinase family.

The protein resides in the cytoplasm. The catalysed reaction is GMP + ATP = GDP + ADP. Essential for recycling GMP and indirectly, cGMP. In Rickettsia conorii (strain ATCC VR-613 / Malish 7), this protein is Guanylate kinase (gmk).